Reading from the N-terminus, the 354-residue chain is Small ribosomal subunit biogenesis GTPase RsgA 1 (354 aa).

A compositionally biased stretch (basic residues) spans 1–24 (MAKKKKLTKGQVRRVRSNQQKRLK). Positions 1–28 (MAKKKKLTKGQVRRVRSNQQKRLKKQEE) are disordered. The CP-type G domain maps to 113–274 (YDGLKPVAAN…LIDSPGVREF (162 aa)). GTP-binding positions include 160–163 (NKVD) and 214–222 (GQSGVGKSS). 4 residues coordinate Zn(2+): cysteine 298, cysteine 303, histidine 305, and cysteine 311.

The protein belongs to the TRAFAC class YlqF/YawG GTPase family. RsgA subfamily. As to quaternary structure, monomer. Associates with 30S ribosomal subunit, binds 16S rRNA. It depends on Zn(2+) as a cofactor.

Its subcellular location is the cytoplasm. Its function is as follows. One of several proteins that assist in the late maturation steps of the functional core of the 30S ribosomal subunit. Helps release RbfA from mature subunits. May play a role in the assembly of ribosomal proteins into the subunit. Circularly permuted GTPase that catalyzes slow GTP hydrolysis, GTPase activity is stimulated by the 30S ribosomal subunit. This chain is Small ribosomal subunit biogenesis GTPase RsgA 1, found in Vibrio parahaemolyticus serotype O3:K6 (strain RIMD 2210633).